A 696-amino-acid polypeptide reads, in one-letter code: Rho-related BTB domain-containing protein 1 (696 aa).

The rho-like stretch occupies residues 1-210 (MDADMDYERP…DNAIRAALIS (210 aa)). GTP contacts are provided by residues 21–28 (GDNAVGKT), 84–88 (DTFGD), and 140–143 (CQLD). BTB domains are found at residues 266 to 427 (ADVL…DEKE) and 485 to 552 (SDVT…SPNL). Positions 327–348 (VDPEEEREEGPPRIPQADQWKS) are disordered.

It belongs to the small GTPase superfamily. Rho family. Ubiquitous, with highest levels in skeletal muscle, placenta, testis, stomach, and kidney, followed by uterus and adrenal gland. Expressed in a variety of fetal tissues.

This is Rho-related BTB domain-containing protein 1 (RHOBTB1) from Homo sapiens (Human).